Here is a 313-residue protein sequence, read N- to C-terminus: Pseudouridine-5'-phosphate glycosidase (313 aa).

The Proton donor role is filled by E26. K87 and A107 together coordinate substrate. A Mn(2+)-binding site is contributed by D139. 141–143 is a binding site for substrate; it reads SAD. The Nucleophile role is filled by K160.

Belongs to the pseudouridine-5'-phosphate glycosidase family. In terms of assembly, homotrimer. Mn(2+) serves as cofactor.

It catalyses the reaction D-ribose 5-phosphate + uracil = psi-UMP + H2O. Functionally, catalyzes the reversible cleavage of pseudouridine 5'-phosphate (PsiMP) to ribose 5-phosphate and uracil. Functions biologically in the cleavage direction, as part of a pseudouridine degradation pathway. The protein is Pseudouridine-5'-phosphate glycosidase of Corynebacterium aurimucosum (strain ATCC 700975 / DSM 44827 / CIP 107346 / CN-1) (Corynebacterium nigricans).